A 333-amino-acid polypeptide reads, in one-letter code: DNA-directed RNA polymerase subunit alpha (333 aa).

The tract at residues 1 to 234 (MQISVNEFLT…QQLAAFVDLK (234 aa)) is alpha N-terminal domain (alpha-NTD). The tract at residues 248 to 333 (IDPILLRPVD…SLKKDDKATA (86 aa)) is alpha C-terminal domain (alpha-CTD).

This sequence belongs to the RNA polymerase alpha chain family. As to quaternary structure, homodimer. The RNAP catalytic core consists of 2 alpha, 1 beta, 1 beta' and 1 omega subunit. When a sigma factor is associated with the core the holoenzyme is formed, which can initiate transcription.

It catalyses the reaction RNA(n) + a ribonucleoside 5'-triphosphate = RNA(n+1) + diphosphate. Its function is as follows. DNA-dependent RNA polymerase catalyzes the transcription of DNA into RNA using the four ribonucleoside triphosphates as substrates. This Ectopseudomonas mendocina (strain ymp) (Pseudomonas mendocina) protein is DNA-directed RNA polymerase subunit alpha.